The following is a 226-amino-acid chain: Calcium-binding protein 1 (226 aa).

G2 carries N-myristoyl glycine lipidation. Residue C4 is the site of S-palmitoyl cysteine attachment. 4 consecutive EF-hand domains span residues 81-116 (EEIE…MGYM), 135-152 (GHVD…KLLA), 158-193 (IGVK…LLGH), and 195-226 (VGHR…MMSR). Residues D94, D96, D98, Y100, and D105 each contribute to the Ca(2+) site. Ca(2+) is bound by residues D171, N173, D175, and E177. S179 is modified (phosphoserine). Residues E182, D208, N210, D212, R214, and E219 each contribute to the Ca(2+) site.

As to quaternary structure, homodimer. Interacts (via C-terminus) with ITPR1, ITPR2 and ITPR3. This binding is calcium dependent and the interaction correlates with calcium concentration. An additional calcium-independent interaction with the N-terminus of ITPR1 results in a decreased InsP(3) binding to the receptor. Interacts with CACNA1A (via C-terminal CDB motif) in the pre- and postsynaptic membranes. Interacts with CACNA1C (via C-terminal C and IQ motifs). Interacts with CACNA1D. The binding to the C motif is calcium independent whereas the binding to IQ requires the presence of calcium and is mutually exclusive with calmodulin binding. Interacts with TRPC5 (via C-terminus). Interacts (via EF-hands 1 and 2) at microtubules with MAP1LC3B. Interacts with MYO1C. Interacts (via EF-hands 1 and 2) with NSMF (via the central NLS-containing motif region), the interaction occurs in a calcium dependent manner after synaptic NMDA receptor stimulation and prevents nuclear import of NSMF. Interacts with SPACA9. In terms of processing, phosphorylated. The phosphorylation regulates the activity.

The protein localises to the cytoplasm. It is found in the cytoskeleton. It localises to the perinuclear region. Its subcellular location is the cell membrane. The protein resides in the golgi apparatus. The protein localises to the postsynaptic density. Modulates calcium-dependent activity of inositol 1,4,5-triphosphate receptors (ITPRs). Inhibits agonist-induced intracellular calcium signaling. Enhances inactivation and does not support calcium-dependent facilitation of voltage-dependent P/Q-type calcium channels. Causes calcium-dependent facilitation and inhibits inactivation of L-type calcium channels by binding to the same sites as calmodulin in the C-terminal domain of CACNA1C, but has an opposite effect on channel function. Suppresses the calcium-dependent inactivation of CACNA1D. Inhibits TRPC5 channels. Prevents NMDA receptor-induced cellular degeneration. Required for the normal transfer of light signals through the retina. In Bos taurus (Bovine), this protein is Calcium-binding protein 1 (CABP1).